Here is a 175-residue protein sequence, read N- to C-terminus: Protein LHCP TRANSLOCATION DEFECT (175 aa).

A chloroplast-targeting transit peptide spans 1-68 (MASSSISFSC…WFKFGKNGVD (68 aa)). Residues 117-149 (PVDILLMLAATEGDRPKIEELLKAGADYSVKDA) form an ANK repeat.

Interacts with CAO/cpSRP43, but is not a component of the transit complex. Interacts with LHCP (via T14 domain), TIC40 and TIC110. In terms of tissue distribution, highly expressed in leaves and seedlings. Detected in roots, but not in germinating seeds.

The protein resides in the plastid. It localises to the chloroplast thylakoid membrane. It is found in the chloroplast envelope. The protein localises to the chloroplast stroma. Functionally, involved in the import of light-harvesting complex proteins (LHCP) and subsequent routing of these proteins to the chloroplast signal recognition particle (SRP) pathway. This Arabidopsis thaliana (Mouse-ear cress) protein is Protein LHCP TRANSLOCATION DEFECT (LTD).